The sequence spans 200 residues: Nucleoside triphosphate pyrophosphatase (200 aa).

Residue D75 is the Proton acceptor of the active site.

Belongs to the Maf family. It depends on a divalent metal cation as a cofactor.

It is found in the cytoplasm. It carries out the reaction a ribonucleoside 5'-triphosphate + H2O = a ribonucleoside 5'-phosphate + diphosphate + H(+). The catalysed reaction is a 2'-deoxyribonucleoside 5'-triphosphate + H2O = a 2'-deoxyribonucleoside 5'-phosphate + diphosphate + H(+). Nucleoside triphosphate pyrophosphatase. May have a dual role in cell division arrest and in preventing the incorporation of modified nucleotides into cellular nucleic acids. The sequence is that of Nucleoside triphosphate pyrophosphatase from Synechococcus sp. (strain CC9311).